A 261-amino-acid polypeptide reads, in one-letter code: Transmembrane and immunoglobulin domain-containing protein 1 (261 aa).

An N-terminal signal peptide occupies residues 1–26 (MVWKITGPLQACQLLLVVLSLPQGRT). The Ig-like C2-type 1 domain occupies 27 to 113 (SSVLTVNGRT…LQRDQTVSVT (87 aa)). At 27–215 (SSVLTVNGRT…DFHLLVKDKV (189 aa)) the chain is on the extracellular side. A disulfide bond links cysteine 53 and cysteine 102. Residues asparagine 57, asparagine 82, asparagine 92, asparagine 117, asparagine 157, and asparagine 189 are each glycosylated (N-linked (GlcNAc...) asparagine). The Ig-like C2-type 2 domain occupies 121–206 (PPLLSGNGFQ…SSSLKMETMD (86 aa)). A disulfide bond links cysteine 142 and cysteine 194. A helical membrane pass occupies residues 216 to 236 (FVMPAEPIIAACVVVVLTMAF). At 237–261 (ALFSRRKRIMKLCGKKNDPNSETAL) the chain is on the cytoplasmic side.

As to quaternary structure, homodimer. In terms of processing, N-glycosylated.

Its subcellular location is the cell membrane. The protein localises to the cytoplasm. In terms of biological role, may control cell-cell adhesion, cell migration and proliferation, cell morphology, and protects renal epithelial cells from oxidative cell injury to promote cell survival. This is Transmembrane and immunoglobulin domain-containing protein 1 from Mus musculus (Mouse).